A 266-amino-acid polypeptide reads, in one-letter code: MICOS complex subunit MIC27 (266 aa).

Residues 1-27 (MAAIRMGKLTTMPAGLIYASVSVHAAK) constitute a mitochondrion transit peptide. The Mitochondrial intermembrane segment spans residues 28-110 (EEESKKQLVK…YVYMKNPPRD (83 aa)). Residues 111-129 (FLPKMGVITVSGLAGLVSA) form a helical membrane-spanning segment. The Mitochondrial matrix segment spans residues 130–137 (RKGSKFKK). Residues 138–155 (ITYPLGLATLGATVCYPV) form a helical membrane-spanning segment. Residues 156 to 266 (QSVIIAKVTA…NVTNSGVLRI (111 aa)) lie on the Mitochondrial intermembrane side of the membrane. A Phosphoserine modification is found at Ser204.

The protein belongs to the apolipoprotein O/MICOS complex subunit Mic27 family. In terms of assembly, component of the mitochondrial contact site and cristae organizing system (MICOS) complex, composed of at least MICOS10/MIC10, CHCHD3/MIC19, CHCHD6/MIC25, APOOL/MIC27, IMMT/MIC60, APOO/MIC23/MIC26 and MICOS13/MIC13. This complex was also known under the names MINOS or MitOS complex. The MICOS complex associates with mitochondrial outer membrane proteins SAMM50, MTX1 and MTX2 (together described as components of the mitochondrial outer membrane sorting assembly machinery (SAM) complex) and DNAJC11, mitochondrial inner membrane protein TMEM11 and with HSPA9. The MICOS and SAM complexes together with DNAJC11 are part of a large protein complex spanning both membranes termed the mitochondrial intermembrane space bridging (MIB) complex. Interacts with MICOS10/MIC10, IMMT/MIC60 and APOO/MIC23/MIC26.

It localises to the mitochondrion inner membrane. The protein localises to the mitochondrion. Its function is as follows. Component of the MICOS complex, a large protein complex of the mitochondrial inner membrane that plays crucial roles in the maintenance of crista junctions, inner membrane architecture, and formation of contact sites to the outer membrane. Specifically binds to cardiolipin (in vitro) but not to the precursor lipid phosphatidylglycerol. Plays a crucial role in crista junction formation and mitochondrial function. This Pongo abelii (Sumatran orangutan) protein is MICOS complex subunit MIC27 (APOOL).